The primary structure comprises 277 residues: Odontogenic ameloblast-associated protein (277 aa).

Residues 1-15 (MRTLILLGILGATMS) form the signal peptide. The disordered stretch occupies residues 103–124 (TQAGQLDPSQPQTPQQTQRGPK). T115 carries an O-linked (GalNAc...) threonine glycan. The segment at 127–129 (MPS) is interaction with ARHGEF5. T208, T248, and T271 each carry an O-linked (GalNAc...) threonine glycan.

It belongs to the ODAM family. As to quaternary structure, interacts (via C-terminus) with ARHGEF5. Post-translationally, O-glycosylated.

The protein resides in the secreted. It localises to the cytoplasm. Its subcellular location is the nucleus. Functionally, tooth-associated epithelia protein that probably plays a role in odontogenesis, the complex process that results in the initiation and generation of the tooth. May be incorporated in the enamel matrix at the end of mineralization process. Involved in the induction of RHOA activity via interaction with ARHGEF and expression of downstream factors such as ROCK. Plays a role in attachment of the junctional epithelium to the tooth surface. The protein is Odontogenic ameloblast-associated protein (ODAM) of Bos taurus (Bovine).